Reading from the N-terminus, the 336-residue chain is DNA repair protein Rad51 homolog (336 aa).

Over residues 1-10 the composition is skewed to polar residues; sequence MEKLTNVQAQ. The interval 1–20 is disordered; sequence MEKLTNVQAQQEEEEEEGPL. 124 to 131 contacts ATP; it reads GEFRCGKT.

Belongs to the RecA family. RAD51 subfamily. In terms of assembly, interacts with Rrp6; the interaction is required for the recruitment of spn-A to the DNA-damage response foci. In terms of tissue distribution, highly expressed in ovaries.

The protein resides in the nucleus. It localises to the cytoplasm. Functionally, plays an important role in homologous strand exchange, a key step in DNA repair through homologous recombination (HR). Binds to single and double-stranded DNA and exhibits DNA-dependent ATPase activity. Underwinds duplex DNA. Spindle genes are required for each of the symmetry-breaking steps that generate polarity during egg axis formation; oocyte positioning at the posterior of the cyst to generate the first AP polarity and inhibition of gurken (grk) signaling to the follicle cell layer to polarize first the AP axis and then DV axis. May have a role in female meiosis. The polypeptide is DNA repair protein Rad51 homolog (spn-A) (Drosophila melanogaster (Fruit fly)).